Reading from the N-terminus, the 431-residue chain is Enolase (431 aa).

Residue Q167 coordinates (2R)-2-phosphoglycerate. The active-site Proton donor is the E209. Mg(2+)-binding residues include D246, E289, and D316. Residues K341, R370, S371, and K392 each coordinate (2R)-2-phosphoglycerate. K341 serves as the catalytic Proton acceptor.

It belongs to the enolase family. Component of the RNA degradosome, a multiprotein complex involved in RNA processing and mRNA degradation. Mg(2+) is required as a cofactor.

It is found in the cytoplasm. The protein localises to the secreted. It localises to the cell surface. The catalysed reaction is (2R)-2-phosphoglycerate = phosphoenolpyruvate + H2O. It participates in carbohydrate degradation; glycolysis; pyruvate from D-glyceraldehyde 3-phosphate: step 4/5. Functionally, catalyzes the reversible conversion of 2-phosphoglycerate (2-PG) into phosphoenolpyruvate (PEP). It is essential for the degradation of carbohydrates via glycolysis. In Shewanella halifaxensis (strain HAW-EB4), this protein is Enolase.